The chain runs to 351 residues: Ion-translocating oxidoreductase complex subunit D (351 aa).

A run of 4 helical transmembrane segments spans residues 18–38 (IMLLVILACIPGIIAQTYFFG), 42–62 (LIQVALAIMTAVLAEGAVLHL), 87–107 (LPPLAPWWMIVLGTAFAIIIA), and 121–141 (PAMVGYVVLLISFPVQMTSWL). Thr185 carries the FMN phosphoryl threonine modification. Transmembrane regions (helical) follow at residues 212–232 (LAGIGWQWINLGFLAGGLLLL), 241–261 (IPVSFLLALAGCAAISWMIAP), 264–284 (FAPPMLHLFSGATMLGAFFIA), 298–318 (LIFGALIGILVWLIRVYGGYP), and 320–340 (GVAFAVLLANICVPLIDHYTQ).

This sequence belongs to the NqrB/RnfD family. The complex is composed of six subunits: RnfA, RnfB, RnfC, RnfD, RnfE and RnfG. It depends on FMN as a cofactor.

The protein localises to the cell inner membrane. Part of a membrane-bound complex that couples electron transfer with translocation of ions across the membrane. In Yersinia enterocolitica serotype O:8 / biotype 1B (strain NCTC 13174 / 8081), this protein is Ion-translocating oxidoreductase complex subunit D.